A 572-amino-acid chain; its full sequence is Asparagine synthetase [glutamine-hydrolyzing] 1 (572 aa).

The active-site For GATase activity is C2. The Glutamine amidotransferase type-2 domain maps to 2–186 (CGIFAAFRHE…PGHVYDSKTD (185 aa)). Residues 49-53 (RLAIV), 74-76 (NGE), and D97 each bind L-glutamine. One can recognise an Asparagine synthetase domain in the interval 194-546 (PDWLDEKRIP…QKTVADTVMR (353 aa)). L233 lines the ATP pocket. Phosphoserine is present on S265. ATP contacts are provided by residues I292 and 366-367 (SG). Phosphoserine is present on S509.

It carries out the reaction L-aspartate + L-glutamine + ATP + H2O = L-asparagine + L-glutamate + AMP + diphosphate + H(+). The protein operates within amino-acid biosynthesis; L-asparagine biosynthesis; L-asparagine from L-aspartate (L-Gln route): step 1/1. The protein is Asparagine synthetase [glutamine-hydrolyzing] 1 (ASN1) of Saccharomyces cerevisiae (strain ATCC 204508 / S288c) (Baker's yeast).